Reading from the N-terminus, the 409-residue chain is DNA primase DnaG (409 aa).

One can recognise a Toprim domain in the interval 175 to 261 (DAIIVVEGRA…EVEELTRKEI (87 aa)). Glutamate 181, aspartate 223, and aspartate 225 together coordinate Mg(2+). The segment covering 280 to 289 (ERPKDKEREK) has biased composition (basic and acidic residues). A disordered region spans residues 280–322 (ERPKDKEREKGKKPKPKKRPERRGRPRKKKARPKRGPQERRLL). The segment covering 290–314 (GKKPKPKKRPERRGRPRKKKARPKR) has biased composition (basic residues).

The protein belongs to the archaeal DnaG primase family. Forms a ternary complex with MCM helicase and DNA. Component of the archaeal exosome complex. The cofactor is Mg(2+).

It carries out the reaction ssDNA + n NTP = ssDNA/pppN(pN)n-1 hybrid + (n-1) diphosphate.. RNA polymerase that catalyzes the synthesis of short RNA molecules used as primers for DNA polymerase during DNA replication. Also part of the exosome, which is a complex involved in RNA degradation. Acts as a poly(A)-binding protein that enhances the interaction between heteromeric, adenine-rich transcripts and the exosome. The sequence is that of DNA primase DnaG from Methanopyrus kandleri (strain AV19 / DSM 6324 / JCM 9639 / NBRC 100938).